The following is a 328-amino-acid chain: Interleukin-12 subunit beta (328 aa).

The signal sequence occupies residues 1-22 (MCHQQLVISWFSLVFLASPLMA). In terms of domain architecture, Ig-like C2-type spans 29–106 (DVYVVELDWY…LSHSLLLLHK (78 aa)). Cysteines 50 and 90 form a disulfide. N-linked (GlcNAc...) asparagine glycosylation is found at asparagine 125, asparagine 135, asparagine 222, and asparagine 303. The Fibronectin type-III domain occupies 237–328 (PPKNLQLKPL…WSEWASVPCS (92 aa)).

It belongs to the IL-12B family. Heterodimer with IL12A; disulfide-linked. The heterodimer is known as interleukin IL-12. Heterodimer with IL23A; disulfide-linked. The heterodimer is known as interleukin IL-23. Also secreted as a monomer. Interacts with NBR1; this interaction promotes IL-12 secretion.

It is found in the secreted. Cytokine that can act as a growth factor for activated T and NK cells, enhance the lytic activity of NK/lymphokine-activated killer cells, and stimulate the production of IFN-gamma by resting PBMC. Functionally, associates with IL23A to form the IL-23 interleukin, a heterodimeric cytokine which functions in innate and adaptive immunity. IL-23 may constitute with IL-17 an acute response to infection in peripheral tissues. IL-23 binds to a heterodimeric receptor complex composed of IL12RB1 and IL23R, activates the Jak-Stat signaling cascade, stimulates memory rather than naive T-cells and promotes production of pro-inflammatory cytokines. IL-23 induces autoimmune inflammation and thus may be responsible for autoimmune inflammatory diseases and may be important for tumorigenesis. In Papio anubis (Olive baboon), this protein is Interleukin-12 subunit beta (IL12B).